Consider the following 484-residue polypeptide: Ribosomal protein uS12 methylthiotransferase RimO (484 aa).

Residues 8-119 (RRVAMVTLGC…LAERLDDVLA (112 aa)) enclose the MTTase N-terminal domain. Cysteine 17, cysteine 53, cysteine 82, cysteine 184, cysteine 188, and cysteine 191 together coordinate [4Fe-4S] cluster. In terms of domain architecture, Radical SAM core spans 170–401 (LDDSPLAALK…ALADELVAQR (232 aa)). In terms of domain architecture, TRAM spans 403–469 (EDRVGTEVRV…GVDLVVRPVG (67 aa)).

Belongs to the methylthiotransferase family. RimO subfamily. Requires [4Fe-4S] cluster as cofactor.

The protein localises to the cytoplasm. It carries out the reaction L-aspartate(89)-[ribosomal protein uS12]-hydrogen + (sulfur carrier)-SH + AH2 + 2 S-adenosyl-L-methionine = 3-methylsulfanyl-L-aspartate(89)-[ribosomal protein uS12]-hydrogen + (sulfur carrier)-H + 5'-deoxyadenosine + L-methionine + A + S-adenosyl-L-homocysteine + 2 H(+). Catalyzes the methylthiolation of an aspartic acid residue of ribosomal protein uS12. The sequence is that of Ribosomal protein uS12 methylthiotransferase RimO from Saccharopolyspora erythraea (strain ATCC 11635 / DSM 40517 / JCM 4748 / NBRC 13426 / NCIMB 8594 / NRRL 2338).